Here is a 167-residue protein sequence, read N- to C-terminus: Putative pre-16S rRNA nuclease (167 aa).

Residues 1 to 24 are disordered; that stretch reads MVLTQHRVPDRPGDPDQDPGRGRR. Basic and acidic residues predominate over residues 7-21; sequence RVPDRPGDPDQDPGR.

This sequence belongs to the YqgF nuclease family.

The protein localises to the cytoplasm. In terms of biological role, could be a nuclease involved in processing of the 5'-end of pre-16S rRNA. The sequence is that of Putative pre-16S rRNA nuclease from Mycolicibacterium paratuberculosis (strain ATCC BAA-968 / K-10) (Mycobacterium paratuberculosis).